The chain runs to 267 residues: Small ribosomal subunit protein mS23 (267 aa).

Positions 230-267 are disordered; the sequence is VKTASKDGKSSNGSMGAEDVVEKTTSAWETEFVEEESS.

This sequence belongs to the mitochondrion-specific ribosomal protein mS23 family. Component of the mitochondrial small ribosomal subunit.

It localises to the mitochondrion. In Meyerozyma guilliermondii (strain ATCC 6260 / CBS 566 / DSM 6381 / JCM 1539 / NBRC 10279 / NRRL Y-324) (Yeast), this protein is Small ribosomal subunit protein mS23 (RSM25).